The following is a 229-amino-acid chain: Octanoyltransferase (229 aa).

In terms of domain architecture, BPL/LPL catalytic spans 47–225 (PSSPEAVWIL…SLAARFHLAW (179 aa)). Substrate contacts are provided by residues 89 to 96 (RGGEVTHH), 156 to 158 (AIG), and 169 to 171 (GLA). The active-site Acyl-thioester intermediate is Cys-187.

This sequence belongs to the LipB family.

The protein resides in the cytoplasm. It catalyses the reaction octanoyl-[ACP] + L-lysyl-[protein] = N(6)-octanoyl-L-lysyl-[protein] + holo-[ACP] + H(+). It functions in the pathway protein modification; protein lipoylation via endogenous pathway; protein N(6)-(lipoyl)lysine from octanoyl-[acyl-carrier-protein]: step 1/2. Functionally, catalyzes the transfer of endogenously produced octanoic acid from octanoyl-acyl-carrier-protein onto the lipoyl domains of lipoate-dependent enzymes. Lipoyl-ACP can also act as a substrate although octanoyl-ACP is likely to be the physiological substrate. The polypeptide is Octanoyltransferase (Synechococcus sp. (strain CC9902)).